A 222-amino-acid polypeptide reads, in one-letter code: CCA-adding enzyme (222 aa).

2 residues coordinate ATP: S50 and K53. CTP contacts are provided by S50 and K53. Positions 61, 63, and 112 each coordinate Mg(2+). ATP contacts are provided by H135, K155, and Y164. Positions 135, 155, and 164 each coordinate CTP.

This sequence belongs to the tRNA nucleotidyltransferase/poly(A) polymerase family. Archaeal CCA-adding enzyme subfamily. Homodimer. The cofactor is Mg(2+).

It catalyses the reaction a tRNA precursor + 2 CTP + ATP = a tRNA with a 3' CCA end + 3 diphosphate. It carries out the reaction a tRNA with a 3' CCA end + 2 CTP + ATP = a tRNA with a 3' CCACCA end + 3 diphosphate. In terms of biological role, catalyzes the addition and repair of the essential 3'-terminal CCA sequence in tRNAs without using a nucleic acid template. Adds these three nucleotides in the order of C, C, and A to the tRNA nucleotide-73, using CTP and ATP as substrates and producing inorganic pyrophosphate. tRNA 3'-terminal CCA addition is required both for tRNA processing and repair. Also involved in tRNA surveillance by mediating tandem CCA addition to generate a CCACCA at the 3' terminus of unstable tRNAs. While stable tRNAs receive only 3'-terminal CCA, unstable tRNAs are marked with CCACCA and rapidly degraded. The chain is CCA-adding enzyme from Thermoplasma acidophilum.